A 321-amino-acid polypeptide reads, in one-letter code: MQELDLIIVGAGPVGLYAAFYAGMRGLSVAIIESAQVPGGQPQNLYPEKLIYDIAGLPAVTGADLTKNLLEQLAQISHRLFLGESVQKIEKEEGIFSVTTDKSTRRAKGVLLTTGAGLLKPRKLGIDNEETLANEGKISYFITSLKEFEGKNVAVFGGGDSALDWSLMLEKVAKNVHLVHRRTAFRGHEITVDRVMNSNVQVHTPYTFSNLIENELELKKIKSEESLNFSIDKILVNYGFLTNQVTLAENLEVSRNGRVKADSMMQSNIEGLYVAGDASDYPGKMPLMSVGFGEAVHAINAMTKKLEFDHPLRGGHSSSIF.

Residues Glu-33, Gln-41, Tyr-46, Val-86, Leu-119, Asp-277, and Ser-318 each coordinate FAD.

The protein belongs to the ferredoxin--NADP reductase type 2 family. As to quaternary structure, homodimer. The cofactor is FAD.

The catalysed reaction is 2 reduced [2Fe-2S]-[ferredoxin] + NADP(+) + H(+) = 2 oxidized [2Fe-2S]-[ferredoxin] + NADPH. In Lactococcus lactis subsp. lactis (strain IL1403) (Streptococcus lactis), this protein is Ferredoxin--NADP reductase.